The chain runs to 456 residues: Serine/threonine-protein kinase meng-po (456 aa).

The segment at 15–78 is disordered; the sequence is RSFGDGGSTN…RSSIYKKPDK (64 aa). Positions 22-55 are enriched in low complexity; sequence STNSRNSNNNSSTCTNHNNQKRCSTPLTPTSTST. A Protein kinase domain is found at 101–367; the sequence is YNIEKTLAEG…VAKYMKDRWV (267 aa). ATP contacts are provided by residues 107–115 and K130; that span reads LAEGCFAKI. The Proton acceptor role is filled by D221. S334 is modified (phosphoserine; by PKA).

It belongs to the protein kinase superfamily. Ser/Thr protein kinase family. Mg(2+) serves as cofactor. As to expression, expressed in the mushroom bodies (at protein level).

It catalyses the reaction L-seryl-[protein] + ATP = O-phospho-L-seryl-[protein] + ADP + H(+). It carries out the reaction L-threonyl-[protein] + ATP = O-phospho-L-threonyl-[protein] + ADP + H(+). With respect to regulation, activated by Pka-C1-mediated phosphorylation of Ser-334. Its function is as follows. Serine/threonine-protein kinase involved in memory formation. Together with the cAMP-dependent protein kinase A Pka-C1, promotes long-term memory (LTM) by regulating CrebB stability and activity. Involved in the maintenance of anesthesia-sensitive memory (ASM) which includes short-term memory (STM) and middle-term memory (MTM). The chain is Serine/threonine-protein kinase meng-po from Drosophila melanogaster (Fruit fly).